A 256-amino-acid polypeptide reads, in one-letter code: Protein FixA (256 aa).

Belongs to the ETF beta-subunit/FixA family. In terms of assembly, heterodimer of FixA and FixB.

It participates in amine and polyamine metabolism; carnitine metabolism. Its function is as follows. Required for anaerobic carnitine reduction. May bring reductant to CaiA. The chain is Protein FixA from Escherichia coli O81 (strain ED1a).